A 350-amino-acid chain; its full sequence is [LysW]-L-2-aminoadipate/[LysW]-L-glutamate phosphate reductase (350 aa).

NADP(+) is bound at residue 10–13; it reads SGYT. The active site involves C150. Position 317 (N317) interacts with NADP(+).

This sequence belongs to the NAGSA dehydrogenase family. Type 1 subfamily. LysY sub-subfamily.

It localises to the cytoplasm. It carries out the reaction [amino-group carrier protein]-C-terminal-N-(1-carboxy-5-oxopentan-1-yl)-L-glutamine + phosphate + NADP(+) = [amino-group carrier protein]-C-terminal-N-(1-carboxy-5-phosphooxy-5-oxopentan-1-yl)-L-glutamine + NADPH + H(+). It catalyses the reaction [amino-group carrier protein]-C-terminal-gamma-(L-glutamyl-5-semialdehyde)-L-glutamate + phosphate + NADP(+) = [amino-group carrier protein]-C-terminal-gamma-(5-phospho-L-glutamyl)-L-glutamate + NADPH + H(+). It participates in amino-acid biosynthesis; L-lysine biosynthesis via AAA pathway; L-lysine from L-alpha-aminoadipate (Thermus route): step 3/5. Its pathway is amino-acid biosynthesis; L-arginine biosynthesis. In terms of biological role, involved in both the arginine and lysine biosynthetic pathways. This is [LysW]-L-2-aminoadipate/[LysW]-L-glutamate phosphate reductase from Sulfolobus acidocaldarius (strain ATCC 33909 / DSM 639 / JCM 8929 / NBRC 15157 / NCIMB 11770).